The chain runs to 233 residues: ATP synthase subunit a (233 aa).

6 helical membrane passes run 27-47, 85-105, 114-134, 143-163, 189-209, and 210-230; these read ANFV…FAIL, YLAF…IGVV, VPSV…IVGV, LAHF…IELV, VFLK…HVFV, and SFLQ…GAVA.

This sequence belongs to the ATPase A chain family. As to quaternary structure, F-type ATPases have 2 components, CF(1) - the catalytic core - and CF(0) - the membrane proton channel. CF(1) has five subunits: alpha(3), beta(3), gamma(1), delta(1), epsilon(1). CF(0) has three main subunits: a(1), b(2) and c(9-12). The alpha and beta chains form an alternating ring which encloses part of the gamma chain. CF(1) is attached to CF(0) by a central stalk formed by the gamma and epsilon chains, while a peripheral stalk is formed by the delta and b chains.

Its subcellular location is the cell inner membrane. In terms of biological role, key component of the proton channel; it plays a direct role in the translocation of protons across the membrane. In Solibacter usitatus (strain Ellin6076), this protein is ATP synthase subunit a.